Consider the following 284-residue polypeptide: L-ribulose-5-phosphate 3-epimerase UlaE (284 aa).

It belongs to the L-ribulose-5-phosphate 3-epimerase family.

It catalyses the reaction L-ribulose 5-phosphate = L-xylulose 5-phosphate. The protein operates within cofactor degradation; L-ascorbate degradation; D-xylulose 5-phosphate from L-ascorbate: step 3/4. Functionally, catalyzes the isomerization of L-xylulose-5-phosphate to L-ribulose-5-phosphate. Is involved in the anaerobic L-ascorbate utilization. The sequence is that of L-ribulose-5-phosphate 3-epimerase UlaE from Salmonella typhimurium (strain LT2 / SGSC1412 / ATCC 700720).